Reading from the N-terminus, the 652-residue chain is Acetyl-coenzyme A synthetase (652 aa).

Residues 193-196 (RRGK) and Thr312 each bind CoA. ATP contacts are provided by residues 388–390 (GEP), 412–417 (DTWWQT), Asp501, and Arg516. Ser524 is a CoA binding site. Residues Val538, His540, and Val543 each contribute to the Mg(2+) site. Lys611 bears the N6-acetyllysine mark.

It belongs to the ATP-dependent AMP-binding enzyme family. Requires Mg(2+) as cofactor. In terms of processing, acetylated. Deacetylation by the SIR2-homolog deacetylase activates the enzyme.

The enzyme catalyses acetate + ATP + CoA = acetyl-CoA + AMP + diphosphate. In terms of biological role, catalyzes the conversion of acetate into acetyl-CoA (AcCoA), an essential intermediate at the junction of anabolic and catabolic pathways. AcsA undergoes a two-step reaction. In the first half reaction, AcsA combines acetate with ATP to form acetyl-adenylate (AcAMP) intermediate. In the second half reaction, it can then transfer the acetyl group from AcAMP to the sulfhydryl group of CoA, forming the product AcCoA. The polypeptide is Acetyl-coenzyme A synthetase (Streptomyces avermitilis (strain ATCC 31267 / DSM 46492 / JCM 5070 / NBRC 14893 / NCIMB 12804 / NRRL 8165 / MA-4680)).